Reading from the N-terminus, the 460-residue chain is Argininosuccinate lyase (460 aa).

It belongs to the lyase 1 family. Argininosuccinate lyase subfamily.

Its subcellular location is the cytoplasm. It carries out the reaction 2-(N(omega)-L-arginino)succinate = fumarate + L-arginine. Its pathway is amino-acid biosynthesis; L-arginine biosynthesis; L-arginine from L-ornithine and carbamoyl phosphate: step 3/3. The protein is Argininosuccinate lyase of Buchnera aphidicola subsp. Cinara cedri (strain Cc).